The sequence spans 144 residues: Large ribosomal subunit protein uL15 (144 aa).

Residues 1–53 (MRLNTLSPADGSKHAPKRLGRGIGSGLGKTGGRGHKGQNSRSGGGVRRGFEGG) form a disordered region. Residues 21–31 (RGIGSGLGKTG) are compositionally biased toward gly residues.

Belongs to the universal ribosomal protein uL15 family. Part of the 50S ribosomal subunit.

Binds to the 23S rRNA. In Erwinia tasmaniensis (strain DSM 17950 / CFBP 7177 / CIP 109463 / NCPPB 4357 / Et1/99), this protein is Large ribosomal subunit protein uL15.